Consider the following 383-residue polypeptide: Arginine biosynthesis bifunctional protein ArgJ (383 aa).

The substrate site is built by Thr146, Lys168, Thr179, Glu259, Asn378, and Ser383. The Nucleophile role is filled by Thr179.

Belongs to the ArgJ family. As to quaternary structure, heterotetramer of two alpha and two beta chains.

The protein localises to the cytoplasm. The enzyme catalyses N(2)-acetyl-L-ornithine + L-glutamate = N-acetyl-L-glutamate + L-ornithine. It catalyses the reaction L-glutamate + acetyl-CoA = N-acetyl-L-glutamate + CoA + H(+). Its pathway is amino-acid biosynthesis; L-arginine biosynthesis; L-ornithine and N-acetyl-L-glutamate from L-glutamate and N(2)-acetyl-L-ornithine (cyclic): step 1/1. It functions in the pathway amino-acid biosynthesis; L-arginine biosynthesis; N(2)-acetyl-L-ornithine from L-glutamate: step 1/4. Its function is as follows. Catalyzes two activities which are involved in the cyclic version of arginine biosynthesis: the synthesis of N-acetylglutamate from glutamate and acetyl-CoA as the acetyl donor, and of ornithine by transacetylation between N(2)-acetylornithine and glutamate. This is Arginine biosynthesis bifunctional protein ArgJ from Streptomyces coelicolor (strain ATCC BAA-471 / A3(2) / M145).